The primary structure comprises 414 residues: uncharacterized protein (414 aa).

3 disordered regions span residues 136 to 168, 297 to 333, and 346 to 414; these read SSKS…TVPT, PQNF…ENAS, and ALNA…NGSK. The span at 350–359 shows a compositional bias: polar residues; the sequence is PSRSRPTHGS. Positions 399 to 414 are enriched in basic and acidic residues; the sequence is SKSEKIYPEPRRNGSK.

This is an uncharacterized protein from Homo sapiens (Human).